Consider the following 446-residue polypeptide: CBL-interacting protein kinase 8 (446 aa).

Residues 13-266 (YEVGRTIGEG…IEEIRNDEWF (254 aa)) enclose the Protein kinase domain. ATP contacts are provided by residues 19 to 27 (IGEGTFAKV) and Lys42. Asp136 acts as the Proton acceptor in catalysis. The tract at residues 154-181 (DFGLSAWPAQGGALLRTTCGTPNYVAPE) is activation loop. The NAF domain maps to 301-329 (LDDEAGPLTLNAFDLIILSQGLNLAALFD). Residues 336-365 (KLQNRFLSRKPAKVIMSSMEVVAQSMGYKT) are PPI.

Belongs to the protein kinase superfamily. CAMK Ser/Thr protein kinase family. SNF1 subfamily. Mn(2+) serves as cofactor.

The enzyme catalyses L-seryl-[protein] + ATP = O-phospho-L-seryl-[protein] + ADP + H(+). It carries out the reaction L-threonyl-[protein] + ATP = O-phospho-L-threonyl-[protein] + ADP + H(+). Its function is as follows. CIPK serine-threonine protein kinases interact with CBL proteins. Binding of a CBL protein to the regulatory NAF domain of CIPK protein lead to the activation of the kinase in a calcium-dependent manner. In Oryza sativa subsp. japonica (Rice), this protein is CBL-interacting protein kinase 8 (CIPK8).